We begin with the raw amino-acid sequence, 106 residues long: PAT complex subunit Asterix (106 aa).

Residues 1–10 (MSANSMSDPR) show a composition bias toward polar residues. The segment at 1–29 (MSANSMSDPRSPNKVLRYKPPPSECNPAL) is disordered. Position 2 is an N-acetylserine (serine 2). Residues 2–32 (SANSMSDPRSPNKVLRYKPPPSECNPALDDP) lie on the Cytoplasmic side of the membrane. The helical transmembrane segment at 33 to 51 (TPDYMNLLGMIFSMCGLML) threads the bilayer. Residue lysine 52 is a topological domain, lumenal. The helical transmembrane segment at 53-70 (LKWCAWVAVYCSFISFAN) threads the bilayer. Over 71-74 (SRSS) the chain is Cytoplasmic. Residues 75-95 (EDTKQMMSSFMLSISAVVMSY) traverse the membrane as a helical segment. Residues 96 to 106 (LQNPQPMTPPW) are Lumenal-facing.

It belongs to the Asterix family. Component of the PAT complex, composed of WDR83OS/Asterix and CCDC47. The PAT complex is part of the multi-pass translocon (MPT) complex, composed of three subcomplexes, the GEL complex (composed of RAB5IF/OPTI and TMCO1), the BOS complex (composed of NCLN/Nicalin, NOMO1 and TMEM147) and the PAT complex (composed of WDR83OS/Asterix and CCDC47). The MPT complex associates with the SEC61 complex.

Its subcellular location is the endoplasmic reticulum membrane. Component of the multi-pass translocon (MPT) complex that mediates insertion of multi-pass membrane proteins into the lipid bilayer of membranes. The MPT complex takes over after the SEC61 complex: following membrane insertion of the first few transmembrane segments of proteins by the SEC61 complex, the MPT complex occludes the lateral gate of the SEC61 complex to promote insertion of subsequent transmembrane regions. Within the MPT complex, the PAT subcomplex sequesters any highly polar regions in the transmembrane domains away from the non-polar membrane environment until they can be buried in the interior of the fully assembled protein. Within the PAT subcomplex, WDR83OS/Asterix binds to and redirects the substrate to a location behind the SEC61 complex. This chain is PAT complex subunit Asterix (WDR83OS), found in Sus scrofa (Pig).